Consider the following 297-residue polypeptide: CASP-like protein 4A2 (297 aa).

Residues 1–20 (MKMKRTASSNSEAQSYNESP) show a composition bias toward polar residues. Residues 1–135 (MKMKRTASSN…PINGEESTRT (135 aa)) form a disordered region. Topologically, residues 1–149 (MKMKRTASSN…ARGDDLVSLT (149 aa)) are cytoplasmic. Residues 69–83 (LPSPIPPPPPQFPPP) are compositionally biased toward pro residues. A helical membrane pass occupies residues 150-170 (ALGFRITEVILCVISFSIMAA). Topologically, residues 171 to 191 (DKTQGWSGDSYDRYKEYRYCL) are extracellular. Residues 192–212 (AVNVIAFVYSAFEACDAACYI) form a helical membrane-spanning segment. The Cytoplasmic segment spans residues 213–225 (AKESYMINCGFHD). The helical transmembrane segment at 226 to 246 (LFVFSMDQLLAYLLMSASSCA) threads the bilayer. Over 247–265 (ATRVDDWVSNWGKDEFTQM) the chain is Extracellular. The helical transmembrane segment at 266-286 (ATASIAVSFLAFGAFAVSALI) threads the bilayer. Residues 287–297 (SSYRLFTHASS) are Cytoplasmic-facing.

It belongs to the Casparian strip membrane proteins (CASP) family. As to quaternary structure, homodimer and heterodimers.

The protein resides in the cell membrane. The chain is CASP-like protein 4A2 from Arabidopsis thaliana (Mouse-ear cress).